A 189-amino-acid polypeptide reads, in one-letter code: uncharacterized protein (189 aa).

Residues 9-69 enclose the HTH tetR-type domain; the sequence is ADTGGRILRA…SMLTSHIAAV (61 aa). A DNA-binding region (H-T-H motif) is located at residues 32–51; that stretch reads TLAEIARRAGVSRPTVYRRW.

This is an uncharacterized protein from Mycobacterium bovis (strain ATCC BAA-935 / AF2122/97).